A 513-amino-acid polypeptide reads, in one-letter code: MATSSSAWLIFSDHYREILIAIACLVVFSLLRSARSSSKGGLPYNWPIFGMLPAIISNNQFNDFTTARLRKMGWTFIFKGPWLLDMDYIFTCDPSNINHMFNDNFENYPKGELGKVFDIFGNNIFNADGDLWHDHRKMAQTILWDGNYRTMQATFIRNKMDNALIPILDSAACKRNPVDLQDVLLRFTFDTSCFSVLAADPESLTMEFPPVPFSKAADQALDAALTRHITPRLIWKLKRFFNVGSERTLAVAWKVIDSYIYDKIAELKAKRKLVGKINSYDAVSFYMDNFNIHDDKFLRDNAFTYLLAQRNTQSLTMTWLFYALFENPKVELKILSELKSIVDESSERKFNDGFALFDSNMIQSAIYLHATLCEALRIYPPVPFEIKDAHKADVLPSGHKVRAGEKILFSPYAMARMKGIWGDDCLEFKPERWITGNGTLKHEPAYKFFAFSAGPRICLGKELSFTQMKMVVATIIYNFHLQMVKGHVVEQSNSILMDMKHGLMVQVRKRSVM.

A helical membrane pass occupies residues 18-34 (ILIAIACLVVFSLLRSA). Cysteine 458 contributes to the heme binding site.

This sequence belongs to the cytochrome P450 family. Heme serves as cofactor. Mostly expressed in stems, and, to a lower extent, in bulbs, roots, leaves and flowers.

It is found in the membrane. It carries out the reaction 4'-O-methylnorbelladine + reduced [NADPH--hemoprotein reductase] + O2 = (10bR,4aS)-noroxomaritidine + oxidized [NADPH--hemoprotein reductase] + 2 H2O + H(+). The enzyme catalyses 4'-O-methylnorbelladine + reduced [NADPH--hemoprotein reductase] + O2 = (10bS,4aR)-noroxomaritidine + oxidized [NADPH--hemoprotein reductase] + 2 H2O + H(+). Its pathway is alkaloid biosynthesis. Cytochrome P450 that catalyzes an intramolecular para-para' C-C phenol coupling of 4'-O-methylnorbelladine in alkaloids biosynthesis, including haemanthamine- and crinamine-type alkaloids, promising anticancer agents. Catalyzes the formation of (10bR,4aS)-noroxomaritidine and (10bS,4aR)-noroxomaritidine from 4'-O-methylnorbelladine. The sequence is that of Noroxomaritidine synthase 1 from Narcissus pseudonarcissus (Daffodil).